A 501-amino-acid polypeptide reads, in one-letter code: Ribose import ATP-binding protein RbsA (501 aa).

2 ABC transporter domains span residues 8-245 (LKMV…VGRT) and 255-500 (VKKG…VGIN). 40-47 (GENGAGKS) provides a ligand contact to ATP.

This sequence belongs to the ABC transporter superfamily. Ribose importer (TC 3.A.1.2.1) family. As to quaternary structure, the complex is composed of an ATP-binding protein (RbsA), two transmembrane proteins (RbsC) and a solute-binding protein (RbsB).

The protein localises to the cell membrane. The enzyme catalyses D-ribose(out) + ATP + H2O = D-ribose(in) + ADP + phosphate + H(+). Part of the ABC transporter complex RbsABC involved in ribose import. Responsible for energy coupling to the transport system. The protein is Ribose import ATP-binding protein RbsA of Clostridium perfringens (strain 13 / Type A).